We begin with the raw amino-acid sequence, 690 residues long: Elongation factor G (690 aa).

Residues 8-283 form the tr-type G domain; that stretch reads SKCRNIGIMA…AVVDFLPAPN (276 aa). GTP is bound by residues 17 to 24, 81 to 85, and 135 to 138; these read AHIDAGKT, DTPGH, and NKMD.

The protein belongs to the TRAFAC class translation factor GTPase superfamily. Classic translation factor GTPase family. EF-G/EF-2 subfamily.

It is found in the cytoplasm. Catalyzes the GTP-dependent ribosomal translocation step during translation elongation. During this step, the ribosome changes from the pre-translocational (PRE) to the post-translocational (POST) state as the newly formed A-site-bound peptidyl-tRNA and P-site-bound deacylated tRNA move to the P and E sites, respectively. Catalyzes the coordinated movement of the two tRNA molecules, the mRNA and conformational changes in the ribosome. The sequence is that of Elongation factor G from Ehrlichia canis (strain Jake).